The chain runs to 179 residues: Endoribonuclease YbeY (179 aa).

Zn(2+)-binding residues include His-148, His-152, and His-158.

Belongs to the endoribonuclease YbeY family. Zn(2+) is required as a cofactor.

The protein resides in the cytoplasm. Single strand-specific metallo-endoribonuclease involved in late-stage 70S ribosome quality control and in maturation of the 3' terminus of the 16S rRNA. The polypeptide is Endoribonuclease YbeY (Prochlorococcus marinus (strain MIT 9312)).